A 430-amino-acid chain; its full sequence is MGKNVVILGTQWGDEGKGKIVDLLTDQASLVARFQGGHNAGHTLVIDGKKTVLHLIPSGILREDVQCLIGNGVVLSLEALLKEIGGLEDQGVPVRDRLRLSASCPLILPVHVALDQAREAARGNKKIGTTGRGIGPAYEDKVARRGLRLGDVYQRELFAAKLGEVMDYHNFVLRSYYNAEPVDFQKTLDDTLQLGEDVRSMVTDVTAVLHGARERGENIMFEGAQGTLLDIDHGTYPYVTSSNTTAGGTATGTGFGPLYLDYVLGITKAYTTRVGSGPFPTELFDENGRYLAEKGHEFGSTTGRARRCGWFDAVALKRSIQINSITGLCLTKLDVLDGLEEINICVGYQDAAGNSLECAWDADSYEEVKPVYESLPGWSESTLGVKSEDDLPPNAKAYLKRIEAITGAPIDIISTGPDRVETIIKRHPFS.

GTP is bound by residues 13–19 (GDEGKGK) and 41–43 (GHT). D14 serves as the catalytic Proton acceptor. Mg(2+)-binding residues include D14 and G41. IMP is bound by residues 14-17 (DEGK), 39-42 (NAGH), T130, R144, Q225, T240, and R304. The Proton donor role is filled by H42. 300 to 306 (STTGRAR) is a substrate binding site. Residues R306, 332-334 (KLD), and 414-416 (STG) each bind GTP.

This sequence belongs to the adenylosuccinate synthetase family. Homodimer. Mg(2+) is required as a cofactor.

It is found in the cytoplasm. The enzyme catalyses IMP + L-aspartate + GTP = N(6)-(1,2-dicarboxyethyl)-AMP + GDP + phosphate + 2 H(+). The protein operates within purine metabolism; AMP biosynthesis via de novo pathway; AMP from IMP: step 1/2. Its function is as follows. Plays an important role in the de novo pathway of purine nucleotide biosynthesis. Catalyzes the first committed step in the biosynthesis of AMP from IMP. The polypeptide is Adenylosuccinate synthetase (Alcanivorax borkumensis (strain ATCC 700651 / DSM 11573 / NCIMB 13689 / SK2)).